We begin with the raw amino-acid sequence, 154 residues long: uncharacterized protein (154 aa).

Functionally, this protein may be involved in virus assembly. Essential for virus function. This is an uncharacterized protein from Saccharolobus solfataricus (Sulfolobus solfataricus).